We begin with the raw amino-acid sequence, 155 residues long: Small ribosomal subunit protein uS7c (155 aa).

Belongs to the universal ribosomal protein uS7 family. Part of the 30S ribosomal subunit.

It localises to the plastid. The protein resides in the chloroplast. Its function is as follows. One of the primary rRNA binding proteins, it binds directly to 16S rRNA where it nucleates assembly of the head domain of the 30S subunit. This is Small ribosomal subunit protein uS7c (rps7) from Lactoris fernandeziana.